Reading from the N-terminus, the 737-residue chain is Protein penguin (737 aa).

Residues 1 to 128 are disordered; sequence MVSSEPKGPA…EKKDLKLKRK (128 aa). Composition is skewed to basic and acidic residues over residues 76 to 89 and 107 to 122; these read KKFDKSGATGDKRL and EGEKQDWNKFKKEKKD. A PUM-HD domain is found at 139–490; sequence EANQIHEKLR…EILEQIEAPI (352 aa). 5 Pumilio repeats span residues 167 to 202, 203 to 238, 239 to 274, 388 to 425, and 426 to 462; these read NVGDTISKVVKAHDTARVIQSMLKYASPALRAEISE, KLLPFTVEMCQSKYAQFCVQRMLKYGAPATKAKLVD, SLYGHIVRLAGHSIGSGLLDSMYQSATPNQRIYMRQ, NIKEHLLKIANHEHGHVFLISLLNALDDTKATKKAIYD, and HLHGDLKALMSSPYGRRVIQWLVAPGDTTCFHPEFIR. The disordered stretch occupies residues 577–638; that stretch reads VESSSDDEDE…EEEPAAPLVS (62 aa). The segment covering 580–600 has biased composition (acidic residues); the sequence is SSDDEDEDEDEDEESDDEGDE. Residues 601–615 show a composition bias toward basic and acidic residues; sequence KEQKEAAADDAEPKV. Positions 616–626 are enriched in basic residues; the sequence is KKAKKEPKKPK.

This chain is Protein penguin, found in Drosophila melanogaster (Fruit fly).